We begin with the raw amino-acid sequence, 1035 residues long: Calcium-transporting ATPase 7, plasma membrane-type (1035 aa).

Residues 1-166 lie on the Cytoplasmic side of the membrane; the sequence is MECADYFIGS…KGFFRHVWDA (166 aa). A helical membrane pass occupies residues 167 to 187; it reads LADVFLIVLLVCAAVSLAFGI. At 188–194 the chain is on the extracellular side; the sequence is KEHGIKD. The helical transmembrane segment at 195–215 threads the bilayer; it reads GWYDGVSIFLAVFLVAAVSAV. The Cytoplasmic segment spans residues 216–348; the sequence is SNHSQGKRFD…DPTPLQERLE (133 aa). The helical transmembrane segment at 349–369 threads the bilayer; the sequence is GLTSSIGKVGIAVAVLVFAVL. At 370–395 the chain is on the extracellular side; sequence TARHFTGSTRDEQGNALFDKRNVTFN. Asn391 is a glycosylation site (N-linked (GlcNAc...) asparagine). Residues 396–416 form a helical membrane-spanning segment; it reads AVFSGLVGIFQQAVTIIVVAI. At 417-818 the chain is on the cytoplasmic side; the sequence is PEGLPLAVTL…GRCVYNNIQK (402 aa). The 4-aspartylphosphate intermediate role is filled by Asp460. Residues Asp761 and Asp765 each coordinate Mg(2+). Residues 819–839 form a helical membrane-spanning segment; sequence FIQFQLTVNVAALVINFVSAV. Residues 840 to 845 lie on the Extracellular side of the membrane; the sequence is TTGRMP. The chain crosses the membrane as a helical span at residues 846–866; it reads LTTVQLLWVNLIMDTMGALAL. Over 867-887 the chain is Cytoplasmic; sequence ATDTPTAGLMRRPPIGRAAPL. A helical membrane pass occupies residues 888-910; sequence ISNAMWRNLAAQAAYQVAVLLAL. Residues 911–919 lie on the Extracellular side of the membrane; it reads QYRGFGGAG. A helical membrane pass occupies residues 920-940; sequence AGERANGTMIFNAFVLCQVFN. The Cytoplasmic portion of the chain corresponds to 941–960; that stretch reads EFNAREIERRNVFAGVHRNR. Residues 961 to 981 form a helical membrane-spanning segment; that stretch reads MFLGIVAVTVALQVVMVELLT. At 982 to 990 the chain is on the extracellular side; sequence KFAGTERLG. A helical membrane pass occupies residues 991–1011; the sequence is WGQWGACVGIAAVSWPIGWAV. Residues 1012 to 1035 are Cytoplasmic-facing; that stretch reads KCIPVPERPFHEIITARRRRRRST.

It belongs to the cation transport ATPase (P-type) (TC 3.A.3) family. Type IIB subfamily.

It localises to the golgi apparatus membrane. The enzyme catalyses Ca(2+)(in) + ATP + H2O = Ca(2+)(out) + ADP + phosphate + H(+). With respect to regulation, activated by calmodulin. In terms of biological role, this magnesium-dependent enzyme catalyzes the hydrolysis of ATP coupled with the translocation of calcium from the cytosol out of the cell, into the endoplasmic reticulum, or into organelles. Involved in salt stress tolerance. The protein is Calcium-transporting ATPase 7, plasma membrane-type of Oryza sativa subsp. japonica (Rice).